Consider the following 447-residue polypeptide: Na(+)-translocating NADH-quinone reductase subunit A (447 aa).

The protein belongs to the NqrA family. In terms of assembly, composed of six subunits; NqrA, NqrB, NqrC, NqrD, NqrE and NqrF.

It carries out the reaction a ubiquinone + n Na(+)(in) + NADH + H(+) = a ubiquinol + n Na(+)(out) + NAD(+). Its function is as follows. NQR complex catalyzes the reduction of ubiquinone-1 to ubiquinol by two successive reactions, coupled with the transport of Na(+) ions from the cytoplasm to the periplasm. NqrA to NqrE are probably involved in the second step, the conversion of ubisemiquinone to ubiquinol. This Tolumonas auensis (strain DSM 9187 / NBRC 110442 / TA 4) protein is Na(+)-translocating NADH-quinone reductase subunit A.